The sequence spans 542 residues: Putative selenium-binding protein (542 aa).

It belongs to the selenium-binding protein family.

This is Putative selenium-binding protein from Caenorhabditis elegans.